The chain runs to 1299 residues: Outer capsid protein VP1 (1299 aa).

The protein belongs to the aquareoviridae outer capsid VP1 protein family.

The protein resides in the virion. It carries out the reaction a 5'-end diphospho-ribonucleoside in mRNA + GTP + H(+) = a 5'-end (5'-triphosphoguanosine)-ribonucleoside in mRNA + diphosphate. The catalysed reaction is a 5'-end (5'-triphosphoguanosine)-ribonucleoside in mRNA + S-adenosyl-L-methionine = a 5'-end (N(7)-methyl 5'-triphosphoguanosine)-ribonucleoside in mRNA + S-adenosyl-L-homocysteine. Outer capsid protein involved in mRNA capping. Catalyzes the last 3 enzymatic activities for formation of the 5' cap structure on the viral plus-strand transcripts, namely the RNA guanylyltransferase, RNA-7N- and RNA-2'O-methyltransferase activities. This Aquareovirus C (isolate Golden shiner/USA/GSRV/1977) (AQRV-C) protein is Outer capsid protein VP1 (S1).